The sequence spans 466 residues: Ribulose bisphosphate carboxylase large chain (466 aa).

An N6,N6,N6-trimethyllysine modification is found at Lys5. Substrate-binding residues include Asn114 and Thr164. The active-site Proton acceptor is Lys166. Lys168 serves as a coordination point for substrate. Mg(2+)-binding residues include Lys192, Asp194, and Glu195. Lys192 carries the post-translational modification N6-carboxylysine. His285 serves as the catalytic Proton acceptor. Substrate contacts are provided by Arg286, His318, and Ser370.

The protein belongs to the RuBisCO large chain family. Type I subfamily. In terms of assembly, heterohexadecamer of 8 large chains and 8 small chains; disulfide-linked. The disulfide link is formed within the large subunit homodimers. Mg(2+) serves as cofactor. Post-translationally, the disulfide bond which can form in the large chain dimeric partners within the hexadecamer appears to be associated with oxidative stress and protein turnover.

It localises to the plastid. The protein localises to the chloroplast. The catalysed reaction is 2 (2R)-3-phosphoglycerate + 2 H(+) = D-ribulose 1,5-bisphosphate + CO2 + H2O. It catalyses the reaction D-ribulose 1,5-bisphosphate + O2 = 2-phosphoglycolate + (2R)-3-phosphoglycerate + 2 H(+). RuBisCO catalyzes two reactions: the carboxylation of D-ribulose 1,5-bisphosphate, the primary event in carbon dioxide fixation, as well as the oxidative fragmentation of the pentose substrate in the photorespiration process. Both reactions occur simultaneously and in competition at the same active site. The polypeptide is Ribulose bisphosphate carboxylase large chain (Averrhoa carambola (Star fruit)).